A 920-amino-acid polypeptide reads, in one-letter code: GTPase activating protein homolog 1 (920 aa).

The span at 65-87 (NLGGLSNDSTNNNSNSNNTIDSS) shows a compositional bias: low complexity. The tract at residues 65 to 91 (NLGGLSNDSTNNNSNSNNTIDSSKPLS) is disordered. The region spanning 90–344 (LSFENDMSDG…FVDIIDPEVD (255 aa)) is the F-BAR domain. Positions 184-276 (LNEAIKDMEK…EDEYKEQINE (93 aa)) form a coiled coil. Residues 403–449 (TNTITSQSGSTIISNGASQPIEIPSPQPISEQQQIPPQQQQQQQQAQ) show a composition bias toward low complexity. Disordered regions lie at residues 403–468 (TNTI…PMGR) and 490–518 (STSSLLTKDGNSTTSSNTSTSNSNQLSKS). The segment covering 450 to 468 (VPPTSINQSSSPPVNPMGR) has biased composition (polar residues). A compositionally biased stretch (low complexity) spans 490 to 513 (STSSLLTKDGNSTTSSNTSTSNSN). A Rho-GAP domain is found at 533–716 (VELEVLIEND…NMIIDSLETK (184 aa)). Residues 727 to 836 (PIIPDDENSD…VSSNGNNINS (110 aa)) are disordered. Over residues 730-741 (PDDENSDDDDDD) the composition is skewed to acidic residues. The segment covering 757-836 (NDINTTNINN…VSSNGNNINS (80 aa)) has biased composition (low complexity).

It is found in the cytoplasm. Its subcellular location is the contractile vacuole. Its function is as follows. Rho GTPase-activating protein involved in the signal transduction pathway. Regulator of the contractile vacuole network as well as involved in driving vacuole emptying. The chain is GTPase activating protein homolog 1 (mgp1) from Dictyostelium discoideum (Social amoeba).